The chain runs to 1505 residues: Phosphatidylinositol 3-kinase C2 domain-containing subunit gamma (1505 aa).

The interval 1–32 is disordered; that stretch reads MAYNWQTEPNRAEPQEGGHDHQQCHHADQHLS. The segment covering 10-31 has biased composition (basic and acidic residues); that stretch reads NRAEPQEGGHDHQQCHHADQHL. The PI3K-RBD domain occupies 278-370; that stretch reads PSRLFADTQF…IQLHLQRSRD (93 aa). Residues 540–688 enclose the C2 PI3K-type domain; sequence LHSHLSFTVC…TPLTLQIDFP (149 aa). The PIK helical domain occupies 703–879; that stretch reads RTDHQEPPRE…QELLAALQFC (177 aa). One can recognise a PI3K/PI4K catalytic domain in the interval 948–1226; that stretch reads DRDACSYFTS…KIKQSLECFP (279 aa). The interval 954 to 960 is G-loop; sequence YFTSNAL. A catalytic loop region spans residues 1090–1098; that stretch reads GVCDRHNDN. Residues 1109–1135 are activation loop; it reads HIDFGKFLGHAQTFGGIKRDRAPFIFT. Residues 1259 to 1371 form the PX domain; the sequence is LNKTRTIQRV…SFFLSEHIQQ (113 aa). A C2 domain is found at 1384 to 1505; sequence HSPDKSPQVQ…KWYPLGNSII (122 aa).

This sequence belongs to the PI3/PI4-kinase family. In terms of tissue distribution, predominantly expressed in normal liver. High levels also found in regenerating liver. Very low levels found in heart and testis.

It is found in the membrane. It carries out the reaction a 1,2-diacyl-sn-glycero-3-phospho-(1D-myo-inositol) + ATP = a 1,2-diacyl-sn-glycero-3-phospho-(1D-myo-inositol-3-phosphate) + ADP + H(+). The catalysed reaction is a 1,2-diacyl-sn-glycero-3-phospho-(1D-myo-inositol 4-phosphate) + ATP = a 1,2-diacyl-sn-glycero-3-phospho-(1D-myo-inositol-3,4-bisphosphate) + ADP + H(+). Generates phosphatidylinositol 3-phosphate (PtdIns3P) and phosphatidylinositol 3,4-bisphosphate (PtdIns(3,4)P2) that act as second messengers. May play a role in SDF1A-stimulated chemotaxis. This chain is Phosphatidylinositol 3-kinase C2 domain-containing subunit gamma (Pik3c2g), found in Rattus norvegicus (Rat).